Consider the following 204-residue polypeptide: FMN-dependent NADH:quinone oxidoreductase 1 (204 aa).

Residues Ser-10 and 15–17 (SLS) each bind FMN.

Belongs to the azoreductase type 1 family. In terms of assembly, homodimer. It depends on FMN as a cofactor.

The enzyme catalyses 2 a quinone + NADH + H(+) = 2 a 1,4-benzosemiquinone + NAD(+). It catalyses the reaction N,N-dimethyl-1,4-phenylenediamine + anthranilate + 2 NAD(+) = 2-(4-dimethylaminophenyl)diazenylbenzoate + 2 NADH + 2 H(+). In terms of biological role, quinone reductase that provides resistance to thiol-specific stress caused by electrophilic quinones. Functionally, also exhibits azoreductase activity. Catalyzes the reductive cleavage of the azo bond in aromatic azo compounds to the corresponding amines. In Rhizobium etli (strain ATCC 51251 / DSM 11541 / JCM 21823 / NBRC 15573 / CFN 42), this protein is FMN-dependent NADH:quinone oxidoreductase 1.